Here is a 103-residue protein sequence, read N- to C-terminus: Co-chaperonin GroES (103 aa).

Belongs to the GroES chaperonin family. Heptamer of 7 subunits arranged in a ring. Interacts with the chaperonin GroEL.

The protein localises to the cytoplasm. Its function is as follows. Together with the chaperonin GroEL, plays an essential role in assisting protein folding. The GroEL-GroES system forms a nano-cage that allows encapsulation of the non-native substrate proteins and provides a physical environment optimized to promote and accelerate protein folding. GroES binds to the apical surface of the GroEL ring, thereby capping the opening of the GroEL channel. This Prochlorococcus marinus subsp. pastoris (strain CCMP1986 / NIES-2087 / MED4) protein is Co-chaperonin GroES.